Consider the following 518-residue polypeptide: ESX-3 secretion system ATPase EccB3 (518 aa).

The disordered stretch occupies residues 1–26 (MTGPVNPDDRRSFSSRTPVNENPDGV). A helical transmembrane segment spans residues 71 to 91 (VLTGALILVTGLVGCFIFSLF).

It belongs to the EccB family. In terms of assembly, part of the ESX-3 / type VII secretion system (T7SS), which is composed of cytosolic and membrane components. The ESX-3 membrane complex is composed of EccB3, EccC3, EccD3 and EccE3.

Its subcellular location is the cell inner membrane. An ATPase. Part of the ESX-3 specialized secretion system, which is required for siderophore-mediated iron acquisition and for the secretion of EsxH and EsxG. This chain is ESX-3 secretion system ATPase EccB3, found in Mycolicibacterium smegmatis (strain ATCC 700084 / mc(2)155) (Mycobacterium smegmatis).